Here is a 236-residue protein sequence, read N- to C-terminus: Snake venom serine protease pallase (236 aa).

Positions 1-227 (VIGGDECNIN…HLDWIENIIA (227 aa)) constitute a Peptidase S1 domain. 6 cysteine pairs are disulfide-bonded: cysteine 7–cysteine 139, cysteine 26–cysteine 42, cysteine 74–cysteine 234, cysteine 118–cysteine 188, cysteine 150–cysteine 167, and cysteine 178–cysteine 203. Residues histidine 41 and aspartate 86 each act as charge relay system in the active site. Serine 182 serves as the catalytic Charge relay system.

The protein belongs to the peptidase S1 family. Snake venom subfamily. Monomer. Expressed by the venom gland.

It is found in the secreted. Its function is as follows. Snake venom serine protease that may act in the hemostasis system of the prey. This chain is Snake venom serine protease pallase, found in Gloydius halys (Chinese water mocassin).